A 212-amino-acid chain; its full sequence is Protein Nef (212 aa).

The N-myristoyl glycine; by host moiety is linked to residue Gly2. Ser6 bears the Phosphoserine; by host mark. The interval 67–71 (EEEEE) is acidic; interacts with host PACS1 and PACS2; stabilizes the interaction of NEF/MHC-I with host AP1M1; necessary for MHC-I internalization. The SH3-binding; interaction with Src family tyrosine kinases stretch occupies residues 75–84 (PVRPQVPLRP). The short motif at 78-81 (PQVP) is the PxxP; stabilizes the interaction of NEF/MHC-I with host AP1M1; necessary for MHC-I internalization element. Positions 114–130 (DILDLWMYHTQGILPDW) are mediates dimerization, Nef-PTE1 interaction. Positions 154-186 (LSAEEVEEANEGDNNALLHPICQHGADDDHKEV) are binding to ATP6V1H. The Dileucine internalization motif; necessary for CD4 internalization signature appears at 170–171 (LL). The Diacidic; necessary for CD4 internalization motif lies at 180–181 (DD).

The protein belongs to the lentivirus primate group Nef protein family. Monomer; cytosolic form. Homodimer; membrane bound form. Interacts with Nef associated p21-activated kinase (PAK2); this interaction activates PAK2. Associates with the Nef-MHC-I-AP1 complex; this complex is required for MHC-I internalization. Interacts (via C-terminus) with host PI3-kinase. Interacts with host PACS1; this interaction seems to be weak. Interacts with host PACS2. Interacts with host LCK and MAPK3; these interactions inhibit the kinase activity of the latter. Interacts with host ATP6V1H; this interaction may play a role in CD4 endocytosis. Associates with the CD4-Nef-AP2 complex; this complex is required for CD4 internalization. Interacts with host AP2 subunit alpha and AP2 subunit sigma2. Interacts with TCR-zeta chain; this interaction up-regulates the Fas ligand (FasL) surface expression. Interacts with host HCK, LYN, and SRC; these interactions activate the Src family kinases. Interacts with MAP3K5; this interaction inhibits the Fas and TNFR-mediated death signals. Interacts with beta-COP and PTE1. Interacts with human RACK1; this increases Nef phosphorylation by PKC. Interacts with TP53; this interaction decreases the half-life of TP53, protecting the infected cell against p53-mediated apoptosis. Post-translationally, the virion-associated Nef proteins are cleaved by the viral protease to release the soluble C-terminal core protein. Nef is probably cleaved concomitantly with viral structural proteins on maturation of virus particles. In terms of processing, myristoylated. Phosphorylated on serine residues, probably by host PKCdelta and theta.

It localises to the host cell membrane. It is found in the virion. The protein resides in the secreted. Its subcellular location is the host Golgi apparatus membrane. Functionally, factor of infectivity and pathogenicity, required for optimal virus replication. Alters numerous pathways of T-lymphocyte function and down-regulates immunity surface molecules in order to evade host defense and increase viral infectivity. Alters the functionality of other immunity cells, like dendritic cells, monocytes/macrophages and NK cells. In infected CD4(+) T-lymphocytes, down-regulates the surface MHC-I, mature MHC-II, CD4, CD28, CCR5 and CXCR4 molecules. Mediates internalization and degradation of host CD4 through the interaction of with the cytoplasmic tail of CD4, the recruitment of AP-2 (clathrin adapter protein complex 2), internalization through clathrin coated pits, and subsequent transport to endosomes and lysosomes for degradation. Diverts host MHC-I molecules to the trans-Golgi network-associated endosomal compartments by an endocytic pathway to finally target them for degradation. MHC-I down-regulation may involve AP-1 (clathrin adapter protein complex 1) or possibly Src family kinase-ZAP70/Syk-PI3K cascade recruited by PACS2. In consequence infected cells are masked for immune recognition by cytotoxic T-lymphocytes. Decreasing the number of immune receptors also prevents reinfection by more HIV particles (superinfection). Down-regulates host SERINC3 and SERINC5 thereby excluding these proteins from the viral particles. Virion infectivity is drastically higher when SERINC3 or SERINC5 are excluded from the viral envelope, because these host antiviral proteins impair the membrane fusion event necessary for subsequent virion penetration. Its function is as follows. Bypasses host T-cell signaling by inducing a transcriptional program nearly identical to that of anti-CD3 cell activation. Interaction with TCR-zeta chain up-regulates the Fas ligand (FasL). Increasing surface FasL molecules and decreasing surface MHC-I molecules on infected CD4(+) cells send attacking cytotoxic CD8+ T-lymphocytes into apoptosis. In terms of biological role, plays a role in optimizing the host cell environment for viral replication without causing cell death by apoptosis. Protects the infected cells from apoptosis in order to keep them alive until the next virus generation is ready to strike. Inhibits the Fas and TNFR-mediated death signals by blocking MAP3K5/ASK1. Decreases the half-life of TP53, protecting the infected cell against p53-mediated apoptosis. Inhibits the apoptotic signals regulated by the Bcl-2 family proteins through the formation of a Nef/PI3-kinase/PAK2 complex that leads to activation of PAK2 and induces phosphorylation of host BAD. Functionally, extracellular Nef protein targets CD4(+) T-lymphocytes for apoptosis by interacting with CXCR4 surface receptors. The sequence is that of Protein Nef from Human immunodeficiency virus type 1 group N (isolate YBF30) (HIV-1).